The sequence spans 162 residues: Beta-carotene hydroxylase (162 aa).

The Fatty acid hydroxylase domain occupies 8–135 (VATVLVMELT…GRDHCVSFGF (128 aa)).

It belongs to the sterol desaturase family.

It catalyses the reaction all-trans-beta-carotene + 4 reduced [2Fe-2S]-[ferredoxin] + 2 O2 + 4 H(+) = all-trans-zeaxanthin + 4 oxidized [2Fe-2S]-[ferredoxin] + 2 H2O. It functions in the pathway carotenoid biosynthesis; astaxanthin biosynthesis. In terms of biological role, catalyzes the hydroxylation reaction from beta-carotene to zeaxanthin via beta-cryptoxanthin. The polypeptide is Beta-carotene hydroxylase (crtZ) (Paracoccus sp. (strain N81106 / MBIC 01143) (Agrobacterium aurantiacum)).